We begin with the raw amino-acid sequence, 434 residues long: MPIITDVYAREVLDSRGNPTVEVEVLTESGAFGRALVPSGASTGEHEAVELRDGDKSRYLGKGVTKAVENVNEIIAPEIIEGEFSVLDQVSIDKMMIALDGTPNKGKLGANAILGVSIAVARAAADLLGQPLYKYLGGFNGKQLPVPMMNIVNGGSHSDAPIAFQEFMILPVGATTFKESLRWGTEIFHNLKSILSQRGLETAVGDEGGFAPKFEGTEDAVETIIQAIEAAGYKPGEEVFLGFDCASSEFYENGVYDYSKFEGEHGAKRTAAEQVDYLEQLVDKYPIITIEDGMDENDWDGWKQLTERIGDRVQLVGDDLFVTNTEILAKGIENGIGNSILIKVNQIGTLTETFDAIEMAQKAGYTAVVSHRSGETEDTTIADIAVATNAGQIKTGSLSRTDRIAKYNQLLRIEDELFETAKYDGIKSFYNLDK.

Alanine 41 is a binding site for phosphoenolpyruvate. Residue glutamine 165 coordinates (2R)-2-phosphoglycerate. Glutamate 207 acts as the Proton donor in catalysis. Mg(2+)-binding residues include aspartate 244, glutamate 291, and aspartate 318. 4 residues coordinate phosphoenolpyruvate: lysine 343, arginine 372, serine 373, and lysine 394. Residues lysine 343, arginine 372, serine 373, and lysine 394 each coordinate (2R)-2-phosphoglycerate. The Proton acceptor role is filled by lysine 343.

The protein belongs to the enolase family. In terms of assembly, homodimer and homooctamer; the homodimer is inactive. The cofactor is Mg(2+).

It localises to the cytoplasm. Its subcellular location is the secreted. The protein resides in the cell surface. The catalysed reaction is (2R)-2-phosphoglycerate = phosphoenolpyruvate + H2O. Its pathway is carbohydrate degradation; glycolysis; pyruvate from D-glyceraldehyde 3-phosphate: step 4/5. Catalyzes the reversible conversion of 2-phosphoglycerate (2-PG) into phosphoenolpyruvate (PEP). It is essential for the degradation of carbohydrates via glycolysis. Functionally, 'Moonlights' as a laminin receptor. Binds laminin when expressed on the bacterial cell surface; this probably induces destruction of the extracellular matrix, favoring invasion and dissemination. The polypeptide is Enolase (Staphylococcus aureus).